Consider the following 321-residue polypeptide: Methionyl-tRNA formyltransferase (321 aa).

112–115 contributes to the (6S)-5,6,7,8-tetrahydrofolate binding site; the sequence is SILP.

The protein belongs to the Fmt family.

The catalysed reaction is L-methionyl-tRNA(fMet) + (6R)-10-formyltetrahydrofolate = N-formyl-L-methionyl-tRNA(fMet) + (6S)-5,6,7,8-tetrahydrofolate + H(+). Functionally, attaches a formyl group to the free amino group of methionyl-tRNA(fMet). The formyl group appears to play a dual role in the initiator identity of N-formylmethionyl-tRNA by promoting its recognition by IF2 and preventing the misappropriation of this tRNA by the elongation apparatus. The sequence is that of Methionyl-tRNA formyltransferase from Shewanella pealeana (strain ATCC 700345 / ANG-SQ1).